The chain runs to 174 residues: MLRLGHRPQRDKRVTTHVALVARAFGAKGIYIHGNDQKLAKKIEDVINVWGGKYFRIEMISNPKKLVNDWKATGGKVVHLTMYGINLPHVQEKLKELDKILVIVGAEKVEGWYYHMADFNVAISNQPHSEVASLALFLDRVYKGEELNIMFGDSKISVIPMERGKKVVRNDGQH.

S-adenosyl-L-methionine is bound by residues Leu80, 105-109, and 123-130; these read GAEKV and ISNQPHSE.

This sequence belongs to the aTrm56 family. As to quaternary structure, homodimer.

It localises to the cytoplasm. The catalysed reaction is cytidine(56) in tRNA + S-adenosyl-L-methionine = 2'-O-methylcytidine(56) in tRNA + S-adenosyl-L-homocysteine + H(+). Specifically catalyzes the AdoMet-dependent 2'-O-ribose methylation of cytidine at position 56 in tRNAs. The protein is tRNA (cytidine(56)-2'-O)-methyltransferase of Metallosphaera sedula (strain ATCC 51363 / DSM 5348 / JCM 9185 / NBRC 15509 / TH2).